We begin with the raw amino-acid sequence, 272 residues long: MSETDMRLVVVGAAGRMGQTLIRIVHETPGVRLHAAIERSGSPFLGRDAGELAGVGQMGVAVSDKPLEAFVEAEGVLDFTAPSATVEFADLAAQARIVHVVGTTGCSADDEARIRAAARHARVIKSGNMSLGVNLLGVLTEKAARALPAQGWDIEILEMHHRHKVDAPSGTALLLGEAAARGRGIKLADHSVRVRDGHTGARVEGAIGFATLRGGSVIGEHSVVIAGEGEMVTLSHSATDRSIFARGAVSAAIWGRSQKPGFYSMLDVLGLD.

Residues Gly12–Met17 and Glu38 contribute to the NAD(+) site. Arg39 contributes to the NADP(+) binding site. NAD(+)-binding positions include Gly102–Thr104 and Ser126–Met129. The active-site Proton donor/acceptor is His160. Position 161 (His161) interacts with (S)-2,3,4,5-tetrahydrodipicolinate. The active-site Proton donor is Lys164. Gly170–Thr171 serves as a coordination point for (S)-2,3,4,5-tetrahydrodipicolinate.

Belongs to the DapB family.

The protein localises to the cytoplasm. It carries out the reaction (S)-2,3,4,5-tetrahydrodipicolinate + NAD(+) + H2O = (2S,4S)-4-hydroxy-2,3,4,5-tetrahydrodipicolinate + NADH + H(+). It catalyses the reaction (S)-2,3,4,5-tetrahydrodipicolinate + NADP(+) + H2O = (2S,4S)-4-hydroxy-2,3,4,5-tetrahydrodipicolinate + NADPH + H(+). It functions in the pathway amino-acid biosynthesis; L-lysine biosynthesis via DAP pathway; (S)-tetrahydrodipicolinate from L-aspartate: step 4/4. Its function is as follows. Catalyzes the conversion of 4-hydroxy-tetrahydrodipicolinate (HTPA) to tetrahydrodipicolinate. This Sinorhizobium medicae (strain WSM419) (Ensifer medicae) protein is 4-hydroxy-tetrahydrodipicolinate reductase.